We begin with the raw amino-acid sequence, 342 residues long: Putative aryl-alcohol dehydrogenase AAD16 (342 aa).

Belongs to the aldo/keto reductase family. Aldo/keto reductase 2 subfamily.

Putative aryl-alcohol dehydrogenase. The sequence is that of Putative aryl-alcohol dehydrogenase AAD16 from Saccharomyces cerevisiae (strain ATCC 204508 / S288c) (Baker's yeast).